Here is a 427-residue protein sequence, read N- to C-terminus: Enolase (427 aa).

Gln-162 lines the (2R)-2-phosphoglycerate pocket. Glu-204 functions as the Proton donor in the catalytic mechanism. Mg(2+) contacts are provided by Asp-241, Glu-284, and Asp-311. (2R)-2-phosphoglycerate contacts are provided by Lys-336, Arg-365, Ser-366, and Lys-387. Residue Lys-336 is the Proton acceptor of the active site.

This sequence belongs to the enolase family. It depends on Mg(2+) as a cofactor.

The protein localises to the cytoplasm. Its subcellular location is the secreted. It is found in the cell surface. It carries out the reaction (2R)-2-phosphoglycerate = phosphoenolpyruvate + H2O. It functions in the pathway carbohydrate degradation; glycolysis; pyruvate from D-glyceraldehyde 3-phosphate: step 4/5. Catalyzes the reversible conversion of 2-phosphoglycerate (2-PG) into phosphoenolpyruvate (PEP). It is essential for the degradation of carbohydrates via glycolysis. The protein is Enolase of Corynebacterium kroppenstedtii (strain DSM 44385 / JCM 11950 / CIP 105744 / CCUG 35717).